Reading from the N-terminus, the 235-residue chain is V-type proton ATPase subunit E2 (235 aa).

The residue at position 1 (Met-1) is an N-acetylmethionine. Residues 8-64 adopt a coiled-coil conformation; that stretch reads KQIQQMVRFIRQEAEEKANEISISAEEEFNIERLQLLESAKRKLRQDYDRKLKQVDI.

Belongs to the V-ATPase E subunit family. As to quaternary structure, V-ATPase is a heteromultimeric enzyme composed of a peripheral catalytic V1 complex (components A to H) attached to an integral membrane V0 proton pore complex (components: a, c, c'', d and e).

The protein localises to the vacuole membrane. Subunit of the peripheral V1 complex of vacuolar ATPase essential for assembly or catalytic function. V-ATPase is responsible for acidifying a variety of intracellular compartments in eukaryotic cells. This chain is V-type proton ATPase subunit E2 (VHA-E2), found in Arabidopsis thaliana (Mouse-ear cress).